A 540-amino-acid polypeptide reads, in one-letter code: Cytochrome P450 monooxygenase ptmG (540 aa).

The N-linked (GlcNAc...) asparagine glycan is linked to Asn17. The next 2 helical transmembrane spans lie at 20-40 (VMTL…YICI) and 325-345 (AAFL…FLLL). Cys474 is a binding site for heme.

Belongs to the cytochrome P450 family. Heme serves as cofactor.

It is found in the membrane. Its pathway is secondary metabolite biosynthesis. Functionally, cytochrome P450 monooxygenase; part of the gene cluster that mediates the biosynthesis of the indole diterpenes penitrems. The geranylgeranyl diphosphate (GGPP) synthase ptmG catalyzes the first step in penitrem biosynthesis via conversion of farnesyl pyrophosphate and isopentyl pyrophosphate into geranylgeranyl pyrophosphate (GGPP). Condensation of indole-3-glycerol phosphate with GGPP by the prenyl transferase ptmC then forms 3-geranylgeranylindole (3-GGI). Epoxidation by the FAD-dependent monooxygenase ptmM leads to a epoxidized-GGI that is substrate of the terpene cyclase ptmB for cyclization to yield paspaline. Paspaline is subsequently converted to 13-desoxypaxilline by the cytochrome P450 monooxygenase ptmP, the latter being then converted to paxilline by the cytochrome P450 monooxygenase ptmQ. Paxilline is converted to beta-paxitriol via C-10 ketoreduction by the short-chain dehydrogenase ptmH which can be monoprenylated at the C-20 by the indole diterpene prenyltransferase ptmD. A two-step elimination (acetylation and elimination) process performed by the O-acetyltransferase ptmV and ptmI leads to the production of the prenylated form of penijanthine. The FAD-linked oxidoreductase ptmO then converts the prenylated form of penijanthine into PC-M5 which is in turn transformed into PC-M4 by the aromatic dimethylallyltransferase ptmE. Five sequential oxidative transformations performed by the cytochrome P450 monooxygenases ptmK, ptmU, ptmL, ptmN and ptmJ yield the various penitrem compounds. PtmK, ptmU and ptmM are involved in the formation of the key bicyclic ring of penitrem C via the formation of the intermediates secopenitrem D and penitrem D. PtmL catalyzes the epoxidation of penitrem D and C to yield penitrem B and F, respectively. PtmJ catalyzes the last benzylic hydroxylation to convert penitrem B to prenitrem E and penitrem F to penitrem A. The polypeptide is Cytochrome P450 monooxygenase ptmG (Penicillium ochrochloron).